Reading from the N-terminus, the 492-residue chain is N-succinylglutamate 5-semialdehyde dehydrogenase (492 aa).

220 to 225 (GRANTG) provides a ligand contact to NAD(+). Catalysis depends on residues Glu-243 and Cys-277.

Belongs to the aldehyde dehydrogenase family. AstD subfamily.

It catalyses the reaction N-succinyl-L-glutamate 5-semialdehyde + NAD(+) + H2O = N-succinyl-L-glutamate + NADH + 2 H(+). Its pathway is amino-acid degradation; L-arginine degradation via AST pathway; L-glutamate and succinate from L-arginine: step 4/5. Catalyzes the NAD-dependent reduction of succinylglutamate semialdehyde into succinylglutamate. The protein is N-succinylglutamate 5-semialdehyde dehydrogenase of Shigella boydii serotype 18 (strain CDC 3083-94 / BS512).